Consider the following 311-residue polypeptide: Pyrimidine-specific ribonucleoside hydrolase RihA (311 aa).

His240 is an active-site residue.

It belongs to the IUNH family. RihA subfamily.

Functionally, hydrolyzes cytidine or uridine to ribose and cytosine or uracil, respectively. This is Pyrimidine-specific ribonucleoside hydrolase RihA from Salmonella gallinarum (strain 287/91 / NCTC 13346).